We begin with the raw amino-acid sequence, 435 residues long: tRNA-2-methylthio-N(6)-dimethylallyladenosine synthase (435 aa).

Residues 5–120 (KKLFIETLGC…ISEVLHKERA (116 aa)) form the MTTase N-terminal domain. Residues C14, C51, C83, C152, C156, and C159 each contribute to the [4Fe-4S] cluster site. Residues 138–372 (RTSPYKAYIN…NLAVNILDEK (235 aa)) enclose the Radical SAM core domain. The TRAM domain occupies 374 to 435 (KTHLGKIYRV…RTILSGEIVG (62 aa)).

The protein belongs to the methylthiotransferase family. MiaB subfamily. Monomer. It depends on [4Fe-4S] cluster as a cofactor.

It localises to the cytoplasm. The enzyme catalyses N(6)-dimethylallyladenosine(37) in tRNA + (sulfur carrier)-SH + AH2 + 2 S-adenosyl-L-methionine = 2-methylsulfanyl-N(6)-dimethylallyladenosine(37) in tRNA + (sulfur carrier)-H + 5'-deoxyadenosine + L-methionine + A + S-adenosyl-L-homocysteine + 2 H(+). In terms of biological role, catalyzes the methylthiolation of N6-(dimethylallyl)adenosine (i(6)A), leading to the formation of 2-methylthio-N6-(dimethylallyl)adenosine (ms(2)i(6)A) at position 37 in tRNAs that read codons beginning with uridine. The polypeptide is tRNA-2-methylthio-N(6)-dimethylallyladenosine synthase (Sulfurimonas denitrificans (strain ATCC 33889 / DSM 1251) (Thiomicrospira denitrificans (strain ATCC 33889 / DSM 1251))).